The chain runs to 77 residues: UPF0270 protein Spro_4577 (77 aa).

The protein belongs to the UPF0270 family.

This Serratia proteamaculans (strain 568) protein is UPF0270 protein Spro_4577.